The chain runs to 706 residues: Signal transducer and activator of transcription 1 (706 aa).

In terms of domain architecture, SH2 spans 477–574 (WCIGFISKND…EEMLRFFESE (98 aa)).

The protein belongs to the transcription factor STAT family. Forms a homodimer or a heterodimer with a related family member. Expressed in adult and larval pharynx, head ganglia, tail ganglia, ventral nerve cord and body muscles.

It localises to the cytoplasm. Its subcellular location is the nucleus. Its function is as follows. Carries out a dual function: signal transduction and activation of transcription. Activated STAT proteins play a role in repression of dauer formation. Neuronal expression is held in check by negative signals through the TGF-beta pathway that target the daf-3 transcription factor. In Caenorhabditis elegans, this protein is Signal transducer and activator of transcription 1.